We begin with the raw amino-acid sequence, 99 residues long: MTLVNYLVLSGLLFTIGAATVLVRRNAIIMFMGVELMLNASNLAFVAFGRLHGTLTGEVVAFFVMVVAAAEVVVGLAIIVSIYRARRSVSVDELSLLKN.

Transmembrane regions (helical) follow at residues Leu-3 to Val-23, Ile-28 to Phe-48, and Val-59 to Ile-79.

The protein belongs to the complex I subunit 4L family. As to quaternary structure, NDH-1 is composed of 14 different subunits. Subunits NuoA, H, J, K, L, M, N constitute the membrane sector of the complex.

It is found in the cell membrane. It catalyses the reaction a quinone + NADH + 5 H(+)(in) = a quinol + NAD(+) + 4 H(+)(out). Functionally, NDH-1 shuttles electrons from NADH, via FMN and iron-sulfur (Fe-S) centers, to quinones in the respiratory chain. The immediate electron acceptor for the enzyme in this species is believed to be a menaquinone. Couples the redox reaction to proton translocation (for every two electrons transferred, four hydrogen ions are translocated across the cytoplasmic membrane), and thus conserves the redox energy in a proton gradient. The protein is NADH-quinone oxidoreductase subunit K of Beutenbergia cavernae (strain ATCC BAA-8 / DSM 12333 / CCUG 43141 / JCM 11478 / NBRC 16432 / NCIMB 13614 / HKI 0122).